Here is a 675-residue protein sequence, read N- to C-terminus: MSIDLNWDTVTGGPDGQELAQKIRDFIHEKFQAVPLPRFIKSVTVHDFEFGSIPPEIELKDITDPLPDFYEEQPGIDSSEESDSEEEVAYENEGEYLDDPVEQQYGRLRGASASESRRRLTVNSSTGSRNGSGPNSGRVAYLPPHLNPHYNGGSGNNSSPSLDRDGRYYRDPNTAGLGGPAHGTNHHHADLGSPFLGVSTPGIPGGTSNLNLHYFTSQFTAGLSGTQTPLAAVAGAAHQRGPSWIADQQQQQQQQNNMLPGGAGGGGAGGGGMGGPVAAAAAAAAATNQGLHSSSTPHLRLHFPGVGTGKPTPGPSPLTGTSTPLGTLGTAGGVGGIGRGMGMAGMGSMASMGYPPTAPVLAIPTGPRHKRNPSSQSLNSVGDYSPVAPAPAERQGLFSAAAATSPPSSTPSPAVGLGIGGRGIGAAGAGAGALATSGPRLQIPKQGLREKHSVSTLAPNSAGTSNNRAGSAILDDDDGFLDGMHDHRDHPAQQQLEPEEDEEEEEEGEEERQRFREPRVEDIQAVFRIKYAGDVKLLLTADILLDYPMPSFVGIPVRLSITGLTFDGVGVVANIRKRVHFCFLSPEDAVAAVGGEENKAAGSGNGSGIGGGSDGAKTKMGGLLQEIRVESEIGQRESGKQSLKNVGKVERFVLEQVRRIFEEEFVYPSFWTFLV.

The SMP-LTD domain maps to 1–675; the sequence is MSIDLNWDTV…VYPSFWTFLV (675 aa). 5 disordered regions span residues 66 to 186, 241 to 270, 307 to 327, 365 to 390, and 444 to 517; these read LPDF…GTNH, GPSW…GAGG, GTGK…PLGT, TGPR…VAPA, and PKQG…RFRE. Residues 78–101 show a composition bias toward acidic residues; sequence SSEESDSEEEVAYENEGEYLDDPV. Over residues 123–137 the composition is skewed to low complexity; it reads NSSTGSRNGSGPNSG. Residues 261 to 270 show a composition bias toward gly residues; sequence GGAGGGGAGG. Residues 317-327 show a composition bias toward low complexity; sequence PLTGTSTPLGT. 2 stretches are compositionally biased toward polar residues: residues 373-382 and 454-469; these read PSSQSLNSVG and VSTL…NNRA. Over residues 497–510 the composition is skewed to acidic residues; that stretch reads EPEEDEEEEEEGEE.

Belongs to the MDM12 family. As to quaternary structure, component of the ER-mitochondria encounter structure (ERMES) or MDM complex, composed of mmm-1, mdm10, mdm12 and mdm34. A mmm-1 homodimer associates with one molecule of mdm12 on each side in a pairwise head-to-tail manner, and the SMP-LTD domains of mmm-1 and mdm12 generate a continuous hydrophobic tunnel for phospholipid trafficking.

It localises to the mitochondrion outer membrane. The protein resides in the endoplasmic reticulum membrane. In terms of biological role, component of the ERMES/MDM complex, which serves as a molecular tether to connect the endoplasmic reticulum (ER) and mitochondria. Components of this complex are involved in the control of mitochondrial shape and protein biogenesis, and function in nonvesicular lipid trafficking between the ER and mitochondria. Mdm12 is required for the interaction of the ER-resident membrane protein MMM1 and the outer mitochondrial membrane-resident beta-barrel protein mdm10. The mdm12-mmm-1 subcomplex functions in the major beta-barrel assembly pathway that is responsible for biogenesis of all mitochondrial outer membrane beta-barrel proteins, and acts in a late step after the SAM complex. The mdm10-mdm12-mmm-1 subcomplex further acts in the TOM40-specific pathway after the action of the mdm12-mmm1 complex. Essential for establishing and maintaining the structure of mitochondria and maintenance of mtDNA nucleoids. The chain is Mitochondrial distribution and morphology protein 12 from Neurospora crassa (strain ATCC 24698 / 74-OR23-1A / CBS 708.71 / DSM 1257 / FGSC 987).